The following is a 400-amino-acid chain: Peroxisome biogenesis factor 16 (400 aa).

The segment at 176–226 is disordered; it reads QKQFQNKRPAVTMSINNNNNINNNDNNNINNNNNTNDDNFNNNNNNNNNRR. Low complexity predominate over residues 190-224; the sequence is INNNNNINNNDNNNINNNNNTNDDNFNNNNNNNNN.

This sequence belongs to the peroxin-16 family.

It is found in the cytoplasm. Its function is as follows. Required for peroxisome membrane biogenesis. The sequence is that of Peroxisome biogenesis factor 16 (pex16) from Dictyostelium discoideum (Social amoeba).